The sequence spans 336 residues: Succinylglutamate desuccinylase (336 aa).

Zn(2+) contacts are provided by histidine 59, glutamate 62, and histidine 151. Residue glutamate 215 is part of the active site.

The protein belongs to the AspA/AstE family. Succinylglutamate desuccinylase subfamily. Zn(2+) is required as a cofactor.

It catalyses the reaction N-succinyl-L-glutamate + H2O = L-glutamate + succinate. The protein operates within amino-acid degradation; L-arginine degradation via AST pathway; L-glutamate and succinate from L-arginine: step 5/5. Transforms N(2)-succinylglutamate into succinate and glutamate. The chain is Succinylglutamate desuccinylase from Pseudomonas fluorescens (strain Pf0-1).